Consider the following 426-residue polypeptide: Elongation factor 1-alpha (426 aa).

The 217-residue stretch at 5-221 (KPHINLAVIG…NALKEPEKPT (217 aa)) folds into the tr-type G domain. Residues 14–21 (GHIDHGKS) are G1. A GTP-binding site is contributed by 14–21 (GHIDHGKS). Serine 21 contacts Mg(2+). Residues 70 to 74 (GITID) form a G2 region. The tract at residues 91–94 (DCPG) is G3. Residues 91–95 (DCPGH) and 146–149 (NKMD) each bind GTP. The segment at 146-149 (NKMD) is G4. The tract at residues 185 to 187 (SAF) is G5.

This sequence belongs to the TRAFAC class translation factor GTPase superfamily. Classic translation factor GTPase family. EF-Tu/EF-1A subfamily.

The protein localises to the cytoplasm. It catalyses the reaction GTP + H2O = GDP + phosphate + H(+). Its function is as follows. GTP hydrolase that promotes the GTP-dependent binding of aminoacyl-tRNA to the A-site of ribosomes during protein biosynthesis. This is Elongation factor 1-alpha from Methanocella arvoryzae (strain DSM 22066 / NBRC 105507 / MRE50).